Here is a 266-residue protein sequence, read N- to C-terminus: Protein crossbronx-like (266 aa).

The UBC core domain occupies 15–178 (KQGYHILAEY…VQEQAILSRN (164 aa)). A disordered region spans residues 234–266 (SSRQLDEEEANQVEKLHRGRIPEHQREESEVSL). Over residues 245 to 266 (QVEKLHRGRIPEHQREESEVSL) the composition is skewed to basic and acidic residues.

This sequence belongs to the ubiquitin-conjugating enzyme family. FTS subfamily.

This chain is Protein crossbronx-like, found in Drosophila melanogaster (Fruit fly).